A 984-amino-acid polypeptide reads, in one-letter code: Putative formate dehydrogenase SAUSA300_2258 (984 aa).

Residues Glu-3 to Asp-79 form the 2Fe-2S ferredoxin-type domain. [2Fe-2S] cluster contacts are provided by Cys-37, Cys-48, Cys-51, and Cys-63. A 4Fe-4S His(Cys)3-ligated-type domain is found at Asp-79 to Gly-119. Positions 95, 99, 102, 109, 147, 150, 153, 157, 190, 193, 196, 200, 264, 267, 271, and 299 each coordinate [4Fe-4S] cluster. 4Fe-4S ferredoxin-type domains are found at residues Pro-138–Thr-165 and Asn-181–Glu-211. The formate dehydrogenase stretch occupies residues Met-252–Lys-984. Residues Ile-257–Gln-313 enclose the 4Fe-4S Mo/W bis-MGD-type domain.

It in the C-terminal section; belongs to the prokaryotic molybdopterin-containing oxidoreductase family. It depends on [2Fe-2S] cluster as a cofactor. [4Fe-4S] cluster is required as a cofactor. Mo-bis(molybdopterin guanine dinucleotide) serves as cofactor.

It carries out the reaction formate + NAD(+) = CO2 + NADH. The protein is Putative formate dehydrogenase SAUSA300_2258 of Staphylococcus aureus (strain USA300).